The primary structure comprises 466 residues: MQATALSSGFNPLTKRKDHRFPRSCSQRNSLSLIQCDIKERSFGESMTITNRGLSFKTNVFEQARSVTGDCSYDETSAKARSHVVAEDKIGVLLLNLGGPETLNDVQPFLYNLFADPDIIRLPRPFQFLQGTIAKFISVVRAPKSKEGYAAIGGGSPLRKITDEQADAIKMSLQAKNIAANVYVGMRYWYPFTEEAVQQIKKDKITRLVVLPLYPQYSISTTGSSIRVLQDLFRKDPYLAGVPVAIIKSWYQRRGYVNSMADLIEKELQTFSDPKEVMIFFSAHGVPVSYVENAGDPYQKQMEECIDLIMEELKARGVLNDHKLAYQSRVGPVQWLKPYTDEVLVDLGKSGVKSLLAVPVSFVSEHIETLEEIDMEYRELALESGVENWGRVPALGLTPSFITDLADAVIESLPSAEAMSNPNAVVDSEDSESSDAFSYIVKMFFGSILAFVLLLSPKMFHAFRNL.

A compositionally biased stretch (polar residues) spans 1–11; that stretch reads MQATALSSGFN. A disordered region spans residues 1-23; it reads MQATALSSGFNPLTKRKDHRFPR. Residues 1–35 constitute a chloroplast and mitochondrion transit peptide; the sequence is MQATALSSGFNPLTKRKDHRFPRSCSQRNSLSLIQ.

The protein belongs to the ferrochelatase family. In terms of tissue distribution, expressed in roots, leaves, stems and flowers. Present in both leaves and roots.

Its subcellular location is the plastid. The protein resides in the chloroplast membrane. The protein localises to the chloroplast thylakoid membrane. It is found in the mitochondrion. The enzyme catalyses heme b + 2 H(+) = protoporphyrin IX + Fe(2+). It functions in the pathway porphyrin-containing compound metabolism; protoheme biosynthesis; protoheme from protoporphyrin-IX: step 1/1. Catalyzes the last step of heme biosynthesis by inserting ferrous iron into protoporphyrin IX to produce protoheme. Produces heme for photosynthetic cytochromes, but does not seem to be involved in stress responses. May be involved in wound-induced supply of heme to defensive hemoproteins outside plastids. Regulates the expression of photosynthesis-associated nuclear genes in undeveloped chloroplasts through production of heme. This Arabidopsis thaliana (Mouse-ear cress) protein is Ferrochelatase-1, chloroplastic/mitochondrial.